The chain runs to 247 residues: Carboxy-S-adenosyl-L-methionine synthase (247 aa).

S-adenosyl-L-methionine contacts are provided by residues tyrosine 39, glycine 64–serine 66, aspartate 89–asparagine 90, aspartate 117–isoleucine 118, asparagine 132, and arginine 199.

This sequence belongs to the class I-like SAM-binding methyltransferase superfamily. Cx-SAM synthase family. In terms of assembly, homodimer.

It carries out the reaction prephenate + S-adenosyl-L-methionine = carboxy-S-adenosyl-L-methionine + 3-phenylpyruvate + H2O. Catalyzes the conversion of S-adenosyl-L-methionine (SAM) to carboxy-S-adenosyl-L-methionine (Cx-SAM). The sequence is that of Carboxy-S-adenosyl-L-methionine synthase from Klebsiella pneumoniae (strain 342).